Here is a 98-residue protein sequence, read N- to C-terminus: uncharacterized protein (98 aa).

This sequence belongs to the CFAP97 family.

This is an uncharacterized protein from Homo sapiens (Human).